We begin with the raw amino-acid sequence, 20 residues long: Cathepsin L1 (20 aa).

A compositionally biased stretch (basic and acidic residues) spans 1–10 (AVPDKIDPRE). Residues 1 to 20 (AVPDKIDPRESGYVTGVKDQ) form a disordered region.

This sequence belongs to the peptidase C1 family. Dimer of a heavy and a light chain linked by disulfide bonds.

It localises to the lysosome. It catalyses the reaction Specificity close to that of papain. As compared to cathepsin B, cathepsin L exhibits higher activity toward protein substrates, but has little activity on Z-Arg-Arg-NHMec, and no peptidyl-dipeptidase activity.. Its function is as follows. Thiol protease that assists the parasite in burrowing through the gut wall and liver of its mammalian host. This is Cathepsin L1 from Fasciola hepatica (Liver fluke).